Here is a 31-residue protein sequence, read N- to C-terminus: uncharacterized protein (31 aa).

The chain crosses the membrane as a helical span at residues 7 to 29 (TVVLINFFAAVGLFTLISMRFGW).

The protein resides in the cell inner membrane. This is an uncharacterized protein from Escherichia coli (strain K12).